The sequence spans 125 residues: MATFKLVISNPKNGIARQVEISGEEAEKLIGKRIGEEISAKELGLNLTEIFGEEIPADTKLKITGGTDKDGFPMRPDVHGPRRVKILVSRGPGFRPKEKGERRKKTVRGNTISPEIVQINMKLVF.

Belongs to the eukaryotic ribosomal protein eS6 family.

The chain is Small ribosomal subunit protein eS6 from Thermococcus onnurineus (strain NA1).